The following is a 122-amino-acid chain: Large ribosomal subunit protein uL14 (122 aa).

It belongs to the universal ribosomal protein uL14 family. In terms of assembly, part of the 50S ribosomal subunit. Forms a cluster with proteins L3 and L19. In the 70S ribosome, L14 and L19 interact and together make contacts with the 16S rRNA in bridges B5 and B8.

Its function is as follows. Binds to 23S rRNA. Forms part of two intersubunit bridges in the 70S ribosome. In Micrococcus luteus (Micrococcus lysodeikticus), this protein is Large ribosomal subunit protein uL14.